The primary structure comprises 310 residues: Methionyl-tRNA formyltransferase (310 aa).

Position 109-112 (109-112) interacts with (6S)-5,6,7,8-tetrahydrofolate; the sequence is SLLP.

Belongs to the Fmt family.

It carries out the reaction L-methionyl-tRNA(fMet) + (6R)-10-formyltetrahydrofolate = N-formyl-L-methionyl-tRNA(fMet) + (6S)-5,6,7,8-tetrahydrofolate + H(+). Its function is as follows. Attaches a formyl group to the free amino group of methionyl-tRNA(fMet). The formyl group appears to play a dual role in the initiator identity of N-formylmethionyl-tRNA by promoting its recognition by IF2 and preventing the misappropriation of this tRNA by the elongation apparatus. The sequence is that of Methionyl-tRNA formyltransferase from Pseudomonas putida (strain W619).